The chain runs to 137 residues: Small heat shock protein IbpA (137 aa).

In terms of domain architecture, sHSP spans 28-137; sequence TQSNGGYPPY…AMKPRRIEIK (110 aa).

Belongs to the small heat shock protein (HSP20) family. In terms of assembly, monomer. Forms homomultimers of about 100-150 subunits at optimal growth temperatures. Conformation changes to monomers at high temperatures or high ionic concentrations.

It localises to the cytoplasm. Its function is as follows. Associates with aggregated proteins, together with IbpB, to stabilize and protect them from irreversible denaturation and extensive proteolysis during heat shock and oxidative stress. Aggregated proteins bound to the IbpAB complex are more efficiently refolded and reactivated by the ATP-dependent chaperone systems ClpB and DnaK/DnaJ/GrpE. Its activity is ATP-independent. The sequence is that of Small heat shock protein IbpA from Pectobacterium atrosepticum (strain SCRI 1043 / ATCC BAA-672) (Erwinia carotovora subsp. atroseptica).